A 244-amino-acid chain; its full sequence is Nodulation protein G (244 aa).

NAD(+) is bound at residue valine 11 to leucine 35. Serine 139 provides a ligand contact to substrate. Tyrosine 152 (proton acceptor) is an active-site residue.

It belongs to the short-chain dehydrogenases/reductases (SDR) family.

Functionally, proposed to modify Nod factor fatty acyl chain. The protein is Nodulation protein G (nodG) of Rhizobium meliloti (Ensifer meliloti).